We begin with the raw amino-acid sequence, 216 residues long: Protein-methionine-sulfoxide reductase heme-binding subunit MsrQ (216 aa).

5 helical membrane passes run 16–36, 48–68, 82–102, 119–139, and 155–175; these read IWALYILGFLPAVWGFYLGAT, EHLLGIWALRFLIATLAITPI, ALGLLAFYYVMMHFLTYMVLD, FITIGMAALVLLIPLAVTSNI, and LVYVIAAAGALHFAMSVKVVG.

Belongs to the MsrQ family. As to quaternary structure, heterodimer of a catalytic subunit (MsrP) and a heme-binding subunit (MsrQ). Requires FMN as cofactor. It depends on heme b as a cofactor.

Its subcellular location is the cell inner membrane. Its function is as follows. Part of the MsrPQ system that repairs oxidized periplasmic proteins containing methionine sulfoxide residues (Met-O), using respiratory chain electrons. Thus protects these proteins from oxidative-stress damage caused by reactive species of oxygen and chlorine generated by the host defense mechanisms. MsrPQ is essential for the maintenance of envelope integrity under bleach stress, rescuing a wide series of structurally unrelated periplasmic proteins from methionine oxidation. MsrQ provides electrons for reduction to the reductase catalytic subunit MsrP, using the quinone pool of the respiratory chain. In Rhizobium meliloti (strain 1021) (Ensifer meliloti), this protein is Protein-methionine-sulfoxide reductase heme-binding subunit MsrQ.